A 193-amino-acid polypeptide reads, in one-letter code: Cysteine and glycine-rich protein 1 (193 aa).

In terms of domain architecture, LIM zinc-binding 1 spans 10–61 (CGVCQKTVYFAEEVQCEGNSFHKSCFLCMVCKKNLDSTTVAVHGEEIYCKSC). The Nuclear localization signal signature appears at 64–69 (KKYGPK). Ser-81 carries the phosphoserine modification. Position 84 is an N6-acetyllysine (Lys-84). Lys-91 participates in a covalent cross-link: Glycyl lysine isopeptide (Lys-Gly) (interchain with G-Cter in SUMO2). Residues Lys-112, Lys-131, Lys-137, and Lys-161 each carry the N6-acetyllysine modification. The region spanning 119–170 (CPRCSQAVYAAEKVIGAGKSWHKACFRCAKCGKGLESTTLADKDGEIYCKGC) is the LIM zinc-binding 2 domain. At Ser-192 the chain carries Phosphoserine.

As to quaternary structure, interacts with ASCC1; ASCC2 and TRIP4.

It localises to the nucleus. Its function is as follows. Could play a role in neuronal development. The sequence is that of Cysteine and glycine-rich protein 1 (CSRP1) from Homo sapiens (Human).